A 165-amino-acid polypeptide reads, in one-letter code: Protein C2-DOMAIN ABA-RELATED 7 (165 aa).

Residue M1 is modified to N-acetylmethionine. Residues 1–106 (MEELVGLLRI…HKMGLQELPD (106 aa)) form the C2 domain. Ca(2+) contacts are provided by R21, D22, D27, D73, K74, D75, and D81.

The protein belongs to the plant CAR protein family. Binds to PYR/PYL/RCAR abscisic acid intracellular receptors in an ABA-independent manner, both at the plasma membrane and in the nucleus.

The protein resides in the cell membrane. It is found in the nucleus. Stimulates the GTPase/ATPase activities of Obg-like ATPases. Mediates the transient calcium-dependent interaction of PYR/PYL/RCAR abscisic acid (ABA) receptors with the plasma membrane and thus regulates ABA sensitivity. This Arabidopsis thaliana (Mouse-ear cress) protein is Protein C2-DOMAIN ABA-RELATED 7.